The sequence spans 184 residues: MQARDPHVNVIFVGLMGAGKTTVGRAVARRLDRPFFDSDHEIEARTGARIPVIFELEGESGFRDREAQMIAELTQRENIVLATGGGAILRPENRKLLHERGLVVYLRANPHDLWLRTRKDKNRPLLQTDDPKAKLEALYEARDPLYRECAHFVIETGRPSVNGLVNMVLMQLEMAGIVAKPLQA.

17–22 (GAGKTT) provides a ligand contact to ATP. Residue threonine 21 coordinates Mg(2+). Substrate contacts are provided by aspartate 39, arginine 63, and glycine 85. Arginine 123 lines the ATP pocket. Arginine 142 provides a ligand contact to substrate.

This sequence belongs to the shikimate kinase family. In terms of assembly, monomer. The cofactor is Mg(2+).

The protein resides in the cytoplasm. It carries out the reaction shikimate + ATP = 3-phosphoshikimate + ADP + H(+). The protein operates within metabolic intermediate biosynthesis; chorismate biosynthesis; chorismate from D-erythrose 4-phosphate and phosphoenolpyruvate: step 5/7. Functionally, catalyzes the specific phosphorylation of the 3-hydroxyl group of shikimic acid using ATP as a cosubstrate. In Burkholderia thailandensis (strain ATCC 700388 / DSM 13276 / CCUG 48851 / CIP 106301 / E264), this protein is Shikimate kinase.